Reading from the N-terminus, the 286-residue chain is 4-diphosphocytidyl-2-C-methyl-D-erythritol kinase (286 aa).

The active site involves Lys-11. An ATP-binding site is contributed by 93–103; it reads PFGAGLGGGSS. The active site involves Asp-135.

Belongs to the GHMP kinase family. IspE subfamily.

It carries out the reaction 4-CDP-2-C-methyl-D-erythritol + ATP = 4-CDP-2-C-methyl-D-erythritol 2-phosphate + ADP + H(+). Its pathway is isoprenoid biosynthesis; isopentenyl diphosphate biosynthesis via DXP pathway; isopentenyl diphosphate from 1-deoxy-D-xylulose 5-phosphate: step 3/6. Functionally, catalyzes the phosphorylation of the position 2 hydroxy group of 4-diphosphocytidyl-2C-methyl-D-erythritol. In Prosthecochloris aestuarii (strain DSM 271 / SK 413), this protein is 4-diphosphocytidyl-2-C-methyl-D-erythritol kinase.